A 541-amino-acid chain; its full sequence is Glutamyl-tRNA(Gln) amidotransferase subunit A, chloroplastic/mitochondrial (541 aa).

Residues Lys121 and Ser196 each act as charge relay system in the active site. The active-site Acyl-ester intermediate is the Ser220.

It belongs to the amidase family. GatA subfamily. As to quaternary structure, subunit of the heterotrimeric GatCAB amidotransferase (AdT) complex, composed of A, B and C subunits.

Its subcellular location is the mitochondrion. The protein resides in the plastid. It is found in the chloroplast stroma. It catalyses the reaction L-glutamyl-tRNA(Gln) + L-glutamine + ATP + H2O = L-glutaminyl-tRNA(Gln) + L-glutamate + ADP + phosphate + H(+). Its function is as follows. Allows the formation of correctly charged Gln-tRNA(Gln) through the transamidation of misacylated Glu-tRNA(Gln) in chloroplasts and mitochondria. The reaction takes place in the presence of glutamine and ATP through an activated gamma-phospho-Glu-tRNA(Gln). This is Glutamyl-tRNA(Gln) amidotransferase subunit A, chloroplastic/mitochondrial from Sorghum bicolor (Sorghum).